A 480-amino-acid chain; its full sequence is Bindin (480 aa).

Residues methionine 1–alanine 20 form the signal peptide. Residues histidine 21–arginine 247 constitute a propeptide that is removed on maturation. A disordered region spans residues alanine 161–lysine 211. Residues aspartate 197 to lysine 211 show a composition bias toward basic and acidic residues. The segment at leucine 377–asparagine 385 is fucose-binding domain. Residues glycine 431–alanine 451 form a helical membrane-spanning segment. The disordered stretch occupies residues glutamine 452–glycine 480.

This sequence belongs to the bindin family.

Its subcellular location is the cytoplasmic vesicle. It is found in the secretory vesicle. The protein localises to the acrosome membrane. Species-specific sea urchin sperm protein required for adhesion of sperm to the egg surface during fertilization. Bindin coats the acrosomal process after it is externalized by the acrosome reaction. It binds to sulfated, fucose-containing polysaccharides on the vitelline layer receptor proteoglycans which cover the egg plasma membrane. The chain is Bindin from Arbacia punctulata (Punctuate sea urchin).